We begin with the raw amino-acid sequence, 360 residues long: Arginase, non-hepatic 1 (360 aa).

Mn(2+) is bound by residues H122, D145, H147, and D149. Substrate contacts are provided by residues 147 to 151 (HADIN), 158 to 160 (SGN), and D204. 2 residues coordinate Mn(2+): D253 and D255. The substrate site is built by T267 and E298.

Belongs to the arginase family. In terms of assembly, homotrimer. Mn(2+) is required as a cofactor. In terms of tissue distribution, expressed at differing tadpole stages in tail, intestine, hindlimb and trunk region. Most abundant in tadpole tail.

The catalysed reaction is L-arginine + H2O = urea + L-ornithine. It functions in the pathway nitrogen metabolism; urea cycle; L-ornithine and urea from L-arginine: step 1/1. Functionally, as well as its role in the urea cycle, may be involved in tissue remodeling. This is Arginase, non-hepatic 1 (arg2-a) from Xenopus laevis (African clawed frog).